We begin with the raw amino-acid sequence, 352 residues long: Phosphoribosylformylglycinamidine cyclo-ligase (352 aa).

The protein belongs to the AIR synthase family.

It localises to the cytoplasm. It carries out the reaction 2-formamido-N(1)-(5-O-phospho-beta-D-ribosyl)acetamidine + ATP = 5-amino-1-(5-phospho-beta-D-ribosyl)imidazole + ADP + phosphate + H(+). The protein operates within purine metabolism; IMP biosynthesis via de novo pathway; 5-amino-1-(5-phospho-D-ribosyl)imidazole from N(2)-formyl-N(1)-(5-phospho-D-ribosyl)glycinamide: step 2/2. This is Phosphoribosylformylglycinamidine cyclo-ligase from Stenotrophomonas maltophilia (strain R551-3).